A 314-amino-acid polypeptide reads, in one-letter code: Inosine-uridine preferring nucleoside hydrolase (314 aa).

Aspartate 10 serves as a coordination point for Ca(2+). Aspartate 14 provides a ligand contact to substrate. Residues aspartate 15 and threonine 126 each contribute to the Ca(2+) site. Substrate-binding residues include asparagine 160, glutamate 166, and asparagine 168. The active-site Proton donor is the histidine 240. Aspartate 241 is a Ca(2+) binding site.

This sequence belongs to the IUNH family. As to quaternary structure, homotetramer. Ca(2+) is required as a cofactor.

It catalyses the reaction inosine + H2O = hypoxanthine + D-ribose. The enzyme catalyses uridine + H2O = D-ribose + uracil. The protein operates within purine metabolism; purine nucleoside salvage. Its activity is regulated as follows. Is potently inhibited by immucillin A and immucillin ACAP, which are transition state inhibitors. In terms of biological role, catalyzes the hydrolysis of the N-glycosidic bond of all of the commonly occurring purine and pyrimidine nucleosides into ribose and the associated base, but has a preference for inosine and uridine as substrates. Likely functions in purine salvage from the host, a fundamental pathway since protozoan parasites such as L.major are incapable of de novo purine biosynthesis. The protein is Inosine-uridine preferring nucleoside hydrolase (NSNH) of Leishmania major.